We begin with the raw amino-acid sequence, 474 residues long: tRNA-2-methylthio-N(6)-dimethylallyladenosine synthase (474 aa).

In terms of domain architecture, MTTase N-terminal spans Lys3 to Gly120. [4Fe-4S] cluster is bound by residues Cys12, Cys49, Cys83, Cys157, Cys161, and Cys164. Residues Arg143–Ala375 form the Radical SAM core domain. The TRAM domain occupies Arg378–Arg441.

The protein belongs to the methylthiotransferase family. MiaB subfamily. Monomer. The cofactor is [4Fe-4S] cluster.

It is found in the cytoplasm. The catalysed reaction is N(6)-dimethylallyladenosine(37) in tRNA + (sulfur carrier)-SH + AH2 + 2 S-adenosyl-L-methionine = 2-methylsulfanyl-N(6)-dimethylallyladenosine(37) in tRNA + (sulfur carrier)-H + 5'-deoxyadenosine + L-methionine + A + S-adenosyl-L-homocysteine + 2 H(+). In terms of biological role, catalyzes the methylthiolation of N6-(dimethylallyl)adenosine (i(6)A), leading to the formation of 2-methylthio-N6-(dimethylallyl)adenosine (ms(2)i(6)A) at position 37 in tRNAs that read codons beginning with uridine. In Escherichia coli O81 (strain ED1a), this protein is tRNA-2-methylthio-N(6)-dimethylallyladenosine synthase.